The chain runs to 148 residues: Large ribosomal subunit protein uL15 (148 aa).

The disordered stretch occupies residues Met1–Glu51. Gly residues predominate over residues Arg21–Ser31.

It belongs to the universal ribosomal protein uL15 family. In terms of assembly, part of the 50S ribosomal subunit.

In terms of biological role, binds to the 23S rRNA. This is Large ribosomal subunit protein uL15 from Phocaeicola vulgatus (strain ATCC 8482 / DSM 1447 / JCM 5826 / CCUG 4940 / NBRC 14291 / NCTC 11154) (Bacteroides vulgatus).